The following is a 303-amino-acid chain: 1-acyl-sn-glycerol-3-phosphate acyltransferase (303 aa).

An HXXXXD motif motif is present at residues 82-87 (HQSTLD). The segment at 278 to 303 (NEPVPSVSISNDVNTHNEGSSVKKMH) is disordered. Residues 284–297 (VSISNDVNTHNEGS) show a composition bias toward polar residues.

Belongs to the 1-acyl-sn-glycerol-3-phosphate acyltransferase family.

It is found in the lipid droplet. It catalyses the reaction a 1-acyl-sn-glycero-3-phosphate + an acyl-CoA = a 1,2-diacyl-sn-glycero-3-phosphate + CoA. The enzyme catalyses a 1-acyl-sn-glycero-3-phosphocholine + an acyl-CoA = a 1,2-diacyl-sn-glycero-3-phosphocholine + CoA. It carries out the reaction a 1-acyl-sn-glycero-3-phosphoethanolamine + an acyl-CoA = a 1,2-diacyl-sn-glycero-3-phosphoethanolamine + CoA. The catalysed reaction is 1-hexadecanoyl-sn-glycero-3-phosphate + (9Z)-octadecenoyl-CoA = 1-hexadecanoyl-2-(9Z-octadecenoyl)-sn-glycero-3-phosphate + CoA. It catalyses the reaction 1-octadecanoyl-sn-glycero-3-phosphate + (9Z)-octadecenoyl-CoA = 1-octadecanoyl-2-(9Z-octadecenoyl)-sn-glycero-3-phosphate + CoA. The enzyme catalyses 1-(9Z-octadecenoyl)-sn-glycero-3-phospho-L-serine + (9Z)-octadecenoyl-CoA = 1,2-di-(9Z)-octadecenoyl-sn-glycero-3-phospho-L-serine + CoA. It carries out the reaction a 1-acyl-sn-glycero-3-phospho-(1D-myo-inositol) + (9Z)-octadecenoyl-CoA = a 1-acyl-2-(9Z-octadecenoyl)-sn-glycero-3-phospho-(1D-myo-inositol) + CoA. The catalysed reaction is 1-heptadecanoyl-sn-glycero-3-phosphate + (9Z)-octadecenoyl-CoA = 1-heptadecanoyl-2-(9Z)-octadecenoyl-sn-glycero-3-phosphate + CoA. It catalyses the reaction 1-heptadecanoyl-sn-glycero-3-phosphate + dodecanoyl-CoA = 1-heptadecanoyl-2-dodecanoyl-sn-glycero-3-phosphate + CoA. The enzyme catalyses 1-heptadecanoyl-sn-glycero-3-phosphate + tetradecanoyl-CoA = 1-heptadecanoyl-2-tetradecanoyl-sn-glycero-3-phosphate + CoA. It participates in phospholipid metabolism; CDP-diacylglycerol biosynthesis; CDP-diacylglycerol from sn-glycerol 3-phosphate: step 2/3. Acyltransferase that catalyzes the sn-2-specific, acyl-CoA-dependent acylation of lysophosphatidic acid (LPA) to phosphatidic acid (PA) in lipid particles. Together with ALE1, plays a central role in PA biosynthesis. PA is the intermediate, from which all glycerophospholipids are synthesized. Can also acylate lysophosphoinositol (LPI) and lysophosphoserine (LPS). The fatty acyl substrates include 18:1-acyl-CoA, 14:0-acyl-CoA, 12:0-acyl-CoA and 10:0-acyl-CoA. The chain is 1-acyl-sn-glycerol-3-phosphate acyltransferase from Saccharomyces cerevisiae (strain ATCC 204508 / S288c) (Baker's yeast).